The following is a 113-amino-acid chain: Hydrogenase maturation factor HybF (113 aa).

Ni(2+) contacts are provided by His-2 and Glu-3. Zn(2+) is bound by residues Cys-73, Cys-76, Cys-89, and Cys-92.

This sequence belongs to the HypA/HybF family. HybF subfamily.

In terms of biological role, involved in the maturation of [NiFe] hydrogenases. Required for nickel insertion into the metal center of the hydrogenase. This Escherichia coli O6:H1 (strain CFT073 / ATCC 700928 / UPEC) protein is Hydrogenase maturation factor HybF.